Reading from the N-terminus, the 294-residue chain is Movement protein (294 aa).

As to quaternary structure, interacts with nucleoprotein.

In terms of biological role, transports viral genome to neighboring plant cells directly through plasmosdesmata, without any budding. The movement protein allows efficient cell to cell propagation, by bypassing the host cell wall barrier. Displays an RNA-binding activity. The protein is Movement protein (3) of Rice yellow stunt virus (RYSV).